The sequence spans 200 residues: 3-isopropylmalate dehydratase small subunit (200 aa).

This sequence belongs to the LeuD family. LeuD type 1 subfamily. In terms of assembly, heterodimer of LeuC and LeuD.

The enzyme catalyses (2R,3S)-3-isopropylmalate = (2S)-2-isopropylmalate. It participates in amino-acid biosynthesis; L-leucine biosynthesis; L-leucine from 3-methyl-2-oxobutanoate: step 2/4. Catalyzes the isomerization between 2-isopropylmalate and 3-isopropylmalate, via the formation of 2-isopropylmaleate. This is 3-isopropylmalate dehydratase small subunit from Vibrio vulnificus (strain CMCP6).